The chain runs to 180 residues: 5'(3')-deoxyribonucleotidase (180 aa).

Residue D9 is the Nucleophile of the active site. Residues D9, D11, and D134 each coordinate Mg(2+). Catalysis depends on D11, which acts as the Proton donor.

This sequence belongs to the 5'(3')-deoxyribonucleotidase family. Mg(2+) serves as cofactor.

Its function is as follows. Dephosphorylates nucleoside monophosphates such as the 5' and 2'(3')-phosphates of deoxyribonucleotides in vitro. This chain is 5'(3')-deoxyribonucleotidase, found in Clostridium acetobutylicum (strain ATCC 824 / DSM 792 / JCM 1419 / IAM 19013 / LMG 5710 / NBRC 13948 / NRRL B-527 / VKM B-1787 / 2291 / W).